Reading from the N-terminus, the 444-residue chain is CCA-adding enzyme (444 aa).

ATP is bound by residues serine 57 and arginine 60. 2 residues coordinate CTP: serine 57 and arginine 60. Residues aspartate 69, aspartate 71, and aspartate 124 each contribute to the Mg(2+) site. Residues histidine 147, lysine 168, and tyrosine 177 each contribute to the ATP site. Histidine 147, lysine 168, and tyrosine 177 together coordinate CTP.

The protein belongs to the tRNA nucleotidyltransferase/poly(A) polymerase family. Archaeal CCA-adding enzyme subfamily. Homodimer. Mg(2+) serves as cofactor.

It catalyses the reaction a tRNA precursor + 2 CTP + ATP = a tRNA with a 3' CCA end + 3 diphosphate. The catalysed reaction is a tRNA with a 3' CCA end + 2 CTP + ATP = a tRNA with a 3' CCACCA end + 3 diphosphate. Its function is as follows. Catalyzes the addition and repair of the essential 3'-terminal CCA sequence in tRNAs without using a nucleic acid template. Adds these three nucleotides in the order of C, C, and A to the tRNA nucleotide-73, using CTP and ATP as substrates and producing inorganic pyrophosphate. tRNA 3'-terminal CCA addition is required both for tRNA processing and repair. Also involved in tRNA surveillance by mediating tandem CCA addition to generate a CCACCA at the 3' terminus of unstable tRNAs. While stable tRNAs receive only 3'-terminal CCA, unstable tRNAs are marked with CCACCA and rapidly degraded. The protein is CCA-adding enzyme of Methanococcus maripaludis (strain C5 / ATCC BAA-1333).